Reading from the N-terminus, the 75-residue chain is Notewaprin-b (75 aa).

A signal peptide spans 1–24; sequence MSSGGLLLLLGLLTLWAELTPVSS. The WAP domain occupies 27-72; sequence RPKKPGLCPPRPQKPPCVRECKNDWICPGEQKCCRYGCIYECRDPI. Disulfide bonds link C34/C60, C43/C64, C47/C59, and C53/C68.

Belongs to the venom waprin family. In terms of tissue distribution, expressed by the venom gland.

It is found in the secreted. In terms of biological role, damages membranes of susceptible bacteria. Has no hemolytic activity. Not toxic to mice. Does not inhibit the proteinases elastase and cathepsin G. This is Notewaprin-b from Notechis scutatus scutatus (Mainland tiger snake).